The primary structure comprises 166 residues: Protein-export protein SecB (166 aa).

A compositionally biased stretch (polar residues) spans 1 to 16 (MTDTSAAGNPTPGQQP). A disordered region spans residues 1–21 (MTDTSAAGNPTPGQQPANPPS).

It belongs to the SecB family. In terms of assembly, homotetramer, a dimer of dimers. One homotetramer interacts with 1 SecA dimer.

It is found in the cytoplasm. In terms of biological role, one of the proteins required for the normal export of preproteins out of the cell cytoplasm. It is a molecular chaperone that binds to a subset of precursor proteins, maintaining them in a translocation-competent state. It also specifically binds to its receptor SecA. The chain is Protein-export protein SecB from Hyphomonas neptunium (strain ATCC 15444).